Reading from the N-terminus, the 89-residue chain is Small ribosomal subunit protein uS15 (89 aa).

Belongs to the universal ribosomal protein uS15 family. Part of the 30S ribosomal subunit. Forms a bridge to the 50S subunit in the 70S ribosome, contacting the 23S rRNA.

One of the primary rRNA binding proteins, it binds directly to 16S rRNA where it helps nucleate assembly of the platform of the 30S subunit by binding and bridging several RNA helices of the 16S rRNA. Its function is as follows. Forms an intersubunit bridge (bridge B4) with the 23S rRNA of the 50S subunit in the ribosome. The protein is Small ribosomal subunit protein uS15 of Cupriavidus pinatubonensis (strain JMP 134 / LMG 1197) (Cupriavidus necator (strain JMP 134)).